The sequence spans 95 residues: Large ribosomal subunit protein bL25 (95 aa).

Belongs to the bacterial ribosomal protein bL25 family. In terms of assembly, part of the 50S ribosomal subunit; part of the 5S rRNA/L5/L18/L25 subcomplex. Contacts the 5S rRNA. Binds to the 5S rRNA independently of L5 and L18.

Its function is as follows. This is one of the proteins that binds to the 5S RNA in the ribosome where it forms part of the central protuberance. The sequence is that of Large ribosomal subunit protein bL25 from Shewanella piezotolerans (strain WP3 / JCM 13877).